The primary structure comprises 279 residues: uncharacterized protein (279 aa).

A signal peptide spans 1–21; it reads MKIIRTLFLLLIAVYGSSVVA.

The protein to E.coli YfcO.

This is an uncharacterized protein from Salmonella typhimurium (strain LT2 / SGSC1412 / ATCC 700720).